A 142-amino-acid chain; its full sequence is Small ribosomal subunit protein uS12 (142 aa).

A disordered region spans residues 1-44 (MTNGKYAARKLKKDRQQRRWSDSEYARRERGLGKKSDPLEGAPQ). A compositionally biased stretch (basic residues) spans 7 to 16 (AARKLKKDRQ). Basic and acidic residues predominate over residues 17–38 (QRRWSDSEYARRERGLGKKSDP).

It belongs to the universal ribosomal protein uS12 family. In terms of assembly, part of the 30S ribosomal subunit.

Its function is as follows. With S4 and S5 plays an important role in translational accuracy. Located at the interface of the 30S and 50S subunits. In Halobacterium salinarum (strain ATCC 29341 / DSM 671 / R1), this protein is Small ribosomal subunit protein uS12.